We begin with the raw amino-acid sequence, 734 residues long: Ribosome-releasing factor 2, mitochondrial (734 aa).

A mitochondrion-targeting transit peptide spans M1 to Y25. The 277-residue stretch at G27 to E303 folds into the tr-type G domain. GTP-binding positions include A36 to T43, D100 to H104, and N154 to D157.

It belongs to the TRAFAC class translation factor GTPase superfamily. Classic translation factor GTPase family. EF-G/EF-2 subfamily.

Its subcellular location is the mitochondrion. Mitochondrial GTPase that mediates the disassembly of ribosomes from messenger RNA at the termination of mitochondrial protein biosynthesis. Not involved in the GTP-dependent ribosomal translocation step during translation elongation. This chain is Ribosome-releasing factor 2, mitochondrial, found in Drosophila grimshawi (Hawaiian fruit fly).